The following is a 756-amino-acid chain: Serine/threonine-protein kinase DCLK2 (756 aa).

Residues 1–44 form a disordered region; that stretch reads MASTRSIELEHFEERDKRPRPGSRRGAPSSSGGSSISGPKGNGL. Residues 7 to 19 show a composition bias toward basic and acidic residues; sequence IELEHFEERDKRP. Positions 24–43 are enriched in low complexity; it reads RRGAPSSSGGSSISGPKGNG. Thr61 carries the phosphothreonine modification. 2 consecutive Doublecortin domains span residues 72–158 and 196–279; these read KKAR…VDYT and KLVT…AQDD. 2 stretches are compositionally biased toward low complexity: residues 301–311 and 323–346; these read KYSGSRSPGFS and TPSS…SPGS. The disordered stretch occupies residues 301-375; it reads KYSGSRSPGF…GPELDRCLSP (75 aa). The segment covering 353–364 has biased composition (polar residues); the sequence is ISAQGRSSSNVN. Residue Ser361 is modified to Phosphoserine. Residues 393–650 form the Protein kinase domain; sequence YRIGKVIGDG…AGEILSHPWV (258 aa). ATP is bound by residues 399 to 407 and Lys422; that span reads IGDGNFAVV. Asp514 acts as the Proton acceptor in catalysis. Phosphoserine is present on Ser646. Thr665 is modified (phosphothreonine). Positions 707 to 756 are disordered; the sequence is QDSSRPSREQTSPVPPSAQEAPPPLESPRPPGPPATSGCDLAGTWRRHRD. Over residues 719 to 740 the composition is skewed to pro residues; it reads PVPPSAQEAPPPLESPRPPGPP.

This sequence belongs to the protein kinase superfamily. CAMK Ser/Thr protein kinase family. CaMK subfamily. In terms of assembly, binds to and stabilizes microtubules. Interacts with MAPK8IP1/JIP-1, MAPK8IP2/JIP-2, MAPK9/JNK2, PPP1R9B/NEURABIN-2 and actin. In terms of processing, autophosphorylated. Expressed in the central and peripheral nervous system including the brain, spinal cord, cranial and dorsal root ganglia and in the parasympathetic ganglia. Present in neurons, but not in glial cells, in most forebrain areas. Strong expression in the hippocampal CA1 pyramidal cell layer. Expressed in the photoreceptor sensory cilium complex and in eyes. Also detected in individual cells of the olfactory epithelium.

It localises to the cytoplasm. Its subcellular location is the cytoskeleton. It carries out the reaction L-seryl-[protein] + ATP = O-phospho-L-seryl-[protein] + ADP + H(+). The catalysed reaction is L-threonyl-[protein] + ATP = O-phospho-L-threonyl-[protein] + ADP + H(+). Protein kinase with a significantly reduced Ca(2+)+/CAM affinity and dependence compared to other members of the CaMK family. May play a role in the down-regulation of CRE-dependent gene activation probably by phosphorylation of the CREB coactivator CRTC2/TORC2 and the resulting retention of TORC2 in the cytoplasm. This chain is Serine/threonine-protein kinase DCLK2 (Dclk2), found in Mus musculus (Mouse).